Consider the following 521-residue polypeptide: Organic cation/carnitine transporter 6 (521 aa).

Topologically, residues 1-37 (MADPISEPLLSHLTDDSGVNEKTRLEALTFDKIVEQS) are cytoplasmic. Residues 38–58 (LSDFGFWQFFQISLVGLALLF) form a helical membrane-spanning segment. At 59–123 (DAQQIFITVY…GLECSSSLLR (65 aa)) the chain is on the extracellular side. The N-linked (GlcNAc...) asparagine glycan is linked to asparagine 79. The chain crosses the membrane as a helical span at residues 124-144 (GMPSSAFYIGAIVGGFFLALI). Residues 145 to 154 (PDDSLGRKKL) lie on the Cytoplasmic side of the membrane. A helical transmembrane segment spans residues 155–177 (VLFSTFAMSITSISVIFSTNVWI). Residues 178–182 (YTFLK) lie on the Extracellular side of the membrane. A helical transmembrane segment spans residues 183 to 200 (FIIGFSRSQTWSYALVLI). 200 to 207 (ISERVSTR) provides a ligand contact to ATP. The Cytoplasmic segment spans residues 201–213 (SERVSTRWRPRAT). The chain crosses the membrane as a helical span at residues 214 to 234 (MIPFTLFVLGFMSLSGIAFLA). At 235–241 (QDSSWRY) the chain is on the extracellular side. Residues 242–262 (LYLYTSVPAVFYCIFLYLFAL) form a helical membrane-spanning segment. Residues 263 to 326 (ESPRWLHMQG…FFFRKWAFRR (64 aa)) are Cytoplasmic-facing. A helical transmembrane segment spans residues 327–347 (ILVVMIIMFGLGISYYGVPLA). Residues 348-356 (ARDIDVNIY) lie on the Extracellular side of the membrane. Residues 357–377 (LSETLNALVELPTFVITPILL) form a helical membrane-spanning segment. At 378-385 (ERFNRRSS) the chain is on the cytoplasmic side. A helical membrane pass occupies residues 386–406 (VLVNTLLGGASGVLCFVLSIL). Over 407 to 412 (GKTEIA) the chain is Extracellular. Residues 413 to 433 (FAFELGTFFCARIGFNLMAVF) traverse the membrane as a helical segment. Residues 434–447 (MVEMFPTCVRSSAT) are Cytoplasmic-facing. The chain crosses the membrane as a helical span at residues 448–468 (MMFRQALVVGGACCPLIASIG). Residues 469–473 (RYIPS) lie on the Extracellular side of the membrane. A helical membrane pass occupies residues 474 to 494 (VSFAIFGIAMSGLGMFVLILP). Topologically, residues 495–521 (ETKGLSLCDSMEEQEKRDQAVNTSHVC) are cytoplasmic.

Belongs to the major facilitator (TC 2.A.1) superfamily. Organic cation transporter (TC 2.A.1.19) family. As to expression, expressed in roots and stems. In the stem of secondary inflorescences, localized to the phloem. Also present in flowers, specifically in the stamen, in the filaments and the connective, and restricted to major veins in leaves.

The protein localises to the vacuole membrane. Its function is as follows. High affinity carnitine transporter involved in the active cellular uptake of carnitine. Also transports organic cations. This Arabidopsis thaliana (Mouse-ear cress) protein is Organic cation/carnitine transporter 6 (OCT6).